Here is an 870-residue protein sequence, read N- to C-terminus: Aldehyde-alcohol dehydrogenase 2 (870 aa).

Cys-252 is an active-site residue. 431–436 serves as a coordination point for NAD(+); sequence GCGSYG.

This sequence in the N-terminal section; belongs to the aldehyde dehydrogenase family. In the C-terminal section; belongs to the iron-containing alcohol dehydrogenase family. As to quaternary structure, seems to form a rod shaped homomer composed of at least 20 identical subunits. The cofactor is Zn(2+). Requires Fe(2+) as cofactor.

It catalyses the reaction a primary alcohol + NAD(+) = an aldehyde + NADH + H(+). The catalysed reaction is a secondary alcohol + NAD(+) = a ketone + NADH + H(+). It carries out the reaction acetaldehyde + NAD(+) + CoA = acetyl-CoA + NADH + H(+). In terms of biological role, this enzyme has two NAD(+)-dependent activities: ADH and ACDH. May be a critical enzyme in the fermentative pathway. The polypeptide is Aldehyde-alcohol dehydrogenase 2 (ADH2) (Entamoeba histolytica (strain ATCC 30459 / HM-1:IMSS / ABRM)).